The following is a 1553-amino-acid chain: Dual oxidase 1 (1553 aa).

An N-terminal signal peptide occupies residues 1 to 21 (MGFRLALAWTLLVGPWMPMGA). Residues 22-596 (RNSISWEVQR…YFKGSGFGFG (575 aa)) lie on the Extracellular side of the membrane. The segment at 26 to 593 (SWEVQRFDGW…MRDYFKGSGF (568 aa)) is peroxidase-like; mediates peroxidase activity. N-linked (GlcNAc...) asparagine glycans are attached at residues asparagine 94, asparagine 342, asparagine 354, and asparagine 534. Residues 597–617 (VTIGTLCCFPLVSLLSAWIVA) form a helical membrane-spanning segment. Over 618–1046 (QLRRRNFKRL…KRFVENYRRH (429 aa)) the chain is Cytoplasmic. 3 consecutive EF-hand domains span residues 815 to 850 (PQDM…FMKG), 851 to 886 (SPEE…FIEI), and 895 to 930 (QLTE…HDSE). Ca(2+)-binding residues include aspartate 828, aspartate 830, asparagine 832, tyrosine 834, glutamate 839, aspartate 864, aspartate 866, asparagine 868, and glutamate 875. The interaction with TXNDC11 stretch occupies residues 956–1250 (YISQEKLCPS…GSFALIQLPR (295 aa)). The chain crosses the membrane as a helical span at residues 1047-1067 (IGCLAVFYTIAGGLFLERAYY). Residues 1068–1082 (YAFAAHHMGITDTTR) lie on the Extracellular side of the membrane. The helical transmembrane segment at 1083 to 1103 (VGIILSRGTAASISFMFSYIL) threads the bilayer. A Ferric oxidoreductase domain is found at 1089–1271 (RGTAASISFM…YVGDKLVSLS (183 aa)). Over 1104–1138 (LTMCRNLITFLRETFLNRYVPFDAAVDFHRLIAST) the chain is Cytoplasmic. A helical transmembrane segment spans residues 1139–1159 (AIILTVLHSAGHVVNVYLFSI). Over 1160–1190 (SPLSVLSCLFPGLFHDNGSEFPQKYYWWFFQ) the chain is Extracellular. A helical transmembrane segment spans residues 1191–1211 (TVPGLTGVMLLLILAIMYVFA). Topologically, residues 1212-1228 (SHHFRRCSFRGFWLTHH) are cytoplasmic. A helical transmembrane segment spans residues 1229 to 1249 (LYILLYMLLIIHGSFALIQLP). Position 1250 (arginine 1250) is a topological domain, extracellular. Residues 1251–1271 (FHIFFLVPALIYVGDKLVSLS) form a helical membrane-spanning segment. One can recognise an FAD-binding FR-type domain in the interval 1272-1378 (RKKVEISVVK…DGPFGEGHQE (107 aa)). The Cytoplasmic portion of the chain corresponds to 1272 to 1553 (RKKVEISVVK…THFSHHYENF (282 aa)).

This sequence in the N-terminal section; belongs to the peroxidase family. As to quaternary structure, interacts with TXNDC11, TPO and CYBA. N-glycosylated. Specifically expressed in thyroid.

Its subcellular location is the apical cell membrane. The enzyme catalyses NADH + O2 + H(+) = H2O2 + NAD(+). The catalysed reaction is NADPH + O2 + H(+) = H2O2 + NADP(+). It functions in the pathway hormone biosynthesis; thyroid hormone biosynthesis. The NADPH oxidase activity is calcium-dependent. Peroxidase activity is inhibited by aminobenzohydrazide. Generates hydrogen peroxide which is required for the activity of thyroid peroxidase/TPO and lactoperoxidase/LPO. Plays a role in thyroid hormones synthesis and lactoperoxidase-mediated antimicrobial defense at the surface of mucosa. May have its own peroxidase activity through its N-terminal peroxidase-like domain. The polypeptide is Dual oxidase 1 (DUOX1) (Sus scrofa (Pig)).